The chain runs to 553 residues: MTREGFVPWPKEAADRYREAGYWRGRPLGSYLHEWAETYGDTVAVVDGDTRLTYRQLVDRADGLACRLLDSGLNPGDAMLVQLPNGWEFVTLTLACLRAGIAPVMAMPAHRGHELRYLAAHAEVTSIAVPDRLGDFDHQALGREVAEDTPSVGLLLVAGGTVGTDATDLRALAEPADDPVTARARLDRIAPDSGDIAVFLLSGGTTGLPKLITRTHDDYEYNARRSAEVCGLDSDSVYLVALPAGHNFPLACPGILGTLMNGGRVVLARTPEPGKVLPLMAAEGVTATAAVPAVVQRWIDAVASGRHPAPPALRLLQVGGARLAPEVARRAEPVLGGTLQQVFGMAEGLLNYTRPDDPDDIKIETQGRPMCPDDEILVVDASDNPVPPGEMGALLTRGPYTPRGYYRAAEHNARAFTPDGWYRTGDVVRLHPSGNLVVEGRDKDLINRGGEKISAEEVENLIYRLPGVARVAAVAKADPDLGERVCAVVVVEPGTQLSLESVRAALTAMQVARYKLPEDLLVVDELPLTKVGKIDKKRLRDVVRGKADSVEAV.

Residue Gly-203 participates in ATP binding. 246–247 (HN) is a substrate binding site. ATP contacts are provided by Gly-320, Val-342, Asp-426, Arg-441, and Lys-533. Lys-533 provides a ligand contact to substrate.

This sequence belongs to the ATP-dependent AMP-binding enzyme family.

The enzyme catalyses salicylate + ATP + CoA = 2-hydroxybenzoyl-CoA + AMP + diphosphate. Involved in the degradation of salicylate via a pathway involving coenzyme A derivative. Catalyzes the conversion of salicylate to salicyloyl-CoA via the formation of a salicylate-adenylate intermediate. The substrate specificity is strong, since benzoate, 3-hydroxybenzoate, 4-hydroxybenzoate, gentisate, 2-aminobenzoate, aminobenzoate, salicylamide, salicylaldoxime and 2-hydroxyphenyl acetate cannot substitute for salicylate. This Streptomyces sp protein is Salicylyl-CoA synthase / salicylate adenylyltransferase.